We begin with the raw amino-acid sequence, 485 residues long: Zinc finger protein 577 (485 aa).

The disordered stretch occupies residues 1 to 21; sequence MKNATIVMSVRREQGSSSGEG. In terms of domain architecture, KRAB spans 23–94; sequence LSFEDVAVGF…EGAAHSQICP (72 aa). A C2H2-type 1; degenerate zinc finger spans residues 158–180; sequence HECSVCGRAFSRKAQLIQHQRTE. C2H2-type zinc fingers lie at residues 186–208, 214–236, 242–264, 270–292, 298–320, 326–348, and 354–376; these read HGCG…QRTH, HECS…QRTH, YRCS…QRSH, YGCS…QRLH, YKCS…QRIH, YECS…QRTH, and YSCR…EKTH.

The protein belongs to the krueppel C2H2-type zinc-finger protein family.

The protein resides in the nucleus. In terms of biological role, may be involved in transcriptional regulation. The polypeptide is Zinc finger protein 577 (ZNF577) (Homo sapiens (Human)).